A 249-amino-acid polypeptide reads, in one-letter code: Ribonuclease HII (249 aa).

A compositionally biased stretch (pro residues) spans 1 to 19; the sequence is MAPRPKAPPQPAEPDPALP. The tract at residues 1–31 is disordered; the sequence is MAPRPKAPPQPAEPDPALPRPRGRPPKAGAV. An RNase H type-2 domain is found at 52–240; it reads APVAGADEVG…VREQQLGLFP (189 aa). A divalent metal cation is bound by residues aspartate 58, glutamate 59, and aspartate 149.

It belongs to the RNase HII family. Requires Mn(2+) as cofactor. The cofactor is Mg(2+).

Its subcellular location is the cytoplasm. The enzyme catalyses Endonucleolytic cleavage to 5'-phosphomonoester.. In terms of biological role, endonuclease that specifically degrades the RNA of RNA-DNA hybrids. In Xanthobacter autotrophicus (strain ATCC BAA-1158 / Py2), this protein is Ribonuclease HII.